The chain runs to 781 residues: uncharacterized protein (781 aa).

The tract at residues 1–34 (MNIAEEPSDEVISSGPEDTDICSQQTSASAEAGD) is disordered. Residue S29 is modified to Phosphoserine. RRM domains follow at residues 195–273 (GNIF…YHVE) and 295–418 (RCLF…KAVQ). A disordered region spans residues 345-375 (SNTRSSSSVSFNEEGSVESNKSSNNTNGNAQ). Positions 347 to 364 (TRSSSSVSFNEEGSVESN) are enriched in low complexity. The segment covering 365–374 (KSSNNTNGNA) has biased composition (polar residues). 4 positions are modified to phosphoserine: S433, S435, S482, and S485. Position 486 is a phosphothreonine (T486). S501 is subject to Phosphoserine. An RRM 3 domain is found at 540–638 (SNLYVKHIPL…QVLSVSFAQK (99 aa)). Residues 640-668 (GNLSSSDDDDQSQTDNSSKFQNFQPHNDY) form a disordered region.

As to quaternary structure, interacts with RBG1.

This is an uncharacterized protein from Saccharomyces cerevisiae (strain ATCC 204508 / S288c) (Baker's yeast).